We begin with the raw amino-acid sequence, 407 residues long: uncharacterized protein (407 aa).

12 consecutive transmembrane segments (helical) span residues I22–V42, L51–A71, A101–V121, V126–V146, V154–V174, A179–L199, G227–Y247, L258–I278, V286–V306, V309–G329, A347–A367, and A369–L389.

It belongs to the major facilitator superfamily. YhhS family.

The protein resides in the cell inner membrane. This is an uncharacterized protein from Burkholderia mallei (strain NCTC 10229).